The following is a 540-amino-acid chain: Na(+)/H(+) antiporter NhaS2 (540 aa).

The next 10 helical transmembrane spans lie at 29 to 49 (ITTLVENLIILLLVATLVALV), 71 to 91 (GLSVGLNPELILNFFLPILIF), 117 to 137 (VVISAAITAVLLKIGLGLAWV), 138 to 158 (TAAGVSVILTITDTVSVIAAF), 207 to 227 (IFVAFVGGGLVGLGLGYLCVG), 256 to 276 (LGVSSAIAVVVAGLVIGNLAL), 296 to 316 (FGVNTLIFLLVGIEVYPSILL), 323 to 343 (LIAIVAYQIGRVFSIYPLLYL), 358 to 378 (VLIAGNVKGSLSMALALALPL), and 389 to 409 (LVFSTVMVSLIGQGLSLPWVV).

Belongs to the monovalent cation:proton antiporter 1 (CPA1) transporter (TC 2.A.36) family.

It localises to the cell membrane. Functionally, required for Na(+) uptake into the cell, especially at low external Na(+) concentrations or low Na(+)/K(+) ratios. May be part of a sodium cycle that permits re-entry of sodium into the cell. The polypeptide is Na(+)/H(+) antiporter NhaS2 (nhaS2) (Synechocystis sp. (strain ATCC 27184 / PCC 6803 / Kazusa)).